Reading from the N-terminus, the 91-residue chain is Small ribosomal subunit protein uS19 (91 aa).

The protein belongs to the universal ribosomal protein uS19 family.

Protein S19 forms a complex with S13 that binds strongly to the 16S ribosomal RNA. The protein is Small ribosomal subunit protein uS19 of Pseudomonas putida (strain ATCC 700007 / DSM 6899 / JCM 31910 / BCRC 17059 / LMG 24140 / F1).